Consider the following 370-residue polypeptide: 3-isopropylmalate dehydrogenase (370 aa).

77–90 contributes to the NAD(+) binding site; sequence GPKWDGVPYDARPE. Substrate-binding residues include Arg-97, Arg-107, Arg-135, and Asp-226. Asp-226, Asp-250, and Asp-254 together coordinate Mg(2+). 290–302 contributes to the NAD(+) binding site; it reads GSAPDIAGKGMAN.

It belongs to the isocitrate and isopropylmalate dehydrogenases family. LeuB type 1 subfamily. As to quaternary structure, homodimer. Requires Mg(2+) as cofactor. Mn(2+) serves as cofactor.

The protein resides in the cytoplasm. It catalyses the reaction (2R,3S)-3-isopropylmalate + NAD(+) = 4-methyl-2-oxopentanoate + CO2 + NADH. It functions in the pathway amino-acid biosynthesis; L-leucine biosynthesis; L-leucine from 3-methyl-2-oxobutanoate: step 3/4. In terms of biological role, catalyzes the oxidation of 3-carboxy-2-hydroxy-4-methylpentanoate (3-isopropylmalate) to 3-carboxy-4-methyl-2-oxopentanoate. The product decarboxylates to 4-methyl-2 oxopentanoate. In Rhodopseudomonas palustris (strain ATCC BAA-98 / CGA009), this protein is 3-isopropylmalate dehydrogenase.